Consider the following 721-residue polypeptide: MKFGQLLKETLMYEYKYSYVNYDKLKKEIKRRNDQGGWSEEDESDFVELLEKELDKVYSFQKNKSAEVMERIRFCEEQTDEVVRRLDSDNPPNENDFAILETELTDIMATVHDLAKFSELNYTAFYKIIKKHDKHTGWILKPVFAARLNAKPFFKEQYDLLVVKLSKLYDFVRTRGSPIKGDSAAGGTQQNFVRQTTKYWVHPNNVTELKIYILKHLPVLVFNPNKEFAREDAAITSIYYDNDDLDFYLGRLEKREGAEAIRLRWYGNMDNNNIFVERKTHREDWTGEKSVKARFPLKEKYVNAFLRGDYTVEEAFAKMRKDGKKSLKEIESLERLAKEVQYTVLSRGMKPYVRSFYERTAFQLPGDARVRISLDTNLSLIREDGPSRAGNNWRRMDIGIDYPFDQLPDEDIVRFPYAILEVKLQTQFGQDPPEWVNNLVNSHLVEAVPKFSKFIHGVSTLFYDRVTLLPYWFPQMDIDIRKPATHTFIQGRSQSGTHSSSVSANVLTDSENTPIHADGDNYVDEESRIGSSSTRNDNSTFQTSDSFQELDERTNLLDISKRKGRDSFVAALNSRLKDIKDSFFLETVPKFEEPTEPTVIYEQKYVSPPGKRIYVPVRVEPKTYFALERTYLDYLRYSILMGSIGITLFSFAKTRSGILGAASFTLVALFAIFYSTFLYLWRAVNIAKHNAVRYDDRFGPTAICVITFAAISANVILNFNA.

The region spanning 1–146 is the SPX domain; the sequence is MKFGQLLKET…GWILKPVFAA (146 aa). Topologically, residues 1 to 631 are cytoplasmic; sequence MKFGQLLKET…KTYFALERTY (631 aa). The ATP site is built by Lys198, Arg262, Arg264, Lys279, Lys292, Tyr357, and Arg359. Glu421 provides a ligand contact to Mn(2+). Lys453 is an active-site residue. Composition is skewed to polar residues over residues 490–513 and 529–547; these read QGRSQSGTHSSSVSANVLTDSENT and IGSSSTRNDNSTFQTSDSF. A disordered region spans residues 490–547; that stretch reads QGRSQSGTHSSSVSANVLTDSENTPIHADGDNYVDEESRIGSSSTRNDNSTFQTSDSF. A Phosphoserine modification is found at Ser495. At Thr497 the chain carries Phosphothreonine. Ser501 bears the Phosphoserine mark. A Phosphothreonine modification is found at Thr534. Ser546 is modified (phosphoserine). Residues 632 to 652 form a helical membrane-spanning segment; it reads LDYLRYSILMGSIGITLFSFA. The Vacuolar segment spans residues 653-657; that stretch reads KTRSG. The helical transmembrane segment at 658 to 678 threads the bilayer; that stretch reads ILGAASFTLVALFAIFYSTFL. Topologically, residues 679 to 697 are cytoplasmic; it reads YLWRAVNIAKHNAVRYDDR. A helical transmembrane segment spans residues 698–718; that stretch reads FGPTAICVITFAAISANVILN. Residues 719–721 lie on the Vacuolar side of the membrane; that stretch reads FNA.

The protein belongs to the VTC4 family. The VTC core complex is an integral membrane heterooligomer composed of at least the catalytic subunit vtc4 and the accessory subunits vtc1 and vtc2. vtc1 is a small membrane protein without hydrophilic domain. Vtc2 and vtc4 are related and have 2 hydrophilic domains that face the cytosol, an N-terminal SPX domain and the central core domain. The central core in vtc4 is the catalytic domain. It depends on Mn(2+) as a cofactor.

The protein resides in the vacuole membrane. The catalysed reaction is [phosphate](n) + ATP = [phosphate](n+1) + ADP. With respect to regulation, activity of the enzyme is Mn(2+)-dependent and enhanced in the presence of pyrophosphate (PPi). Catalytic subunit of the vacuolar transporter chaperone (VTC) complex. The VTC complex acts as a vacuolar polyphosphate polymerase that catalyzes the synthesis of inorganic polyphosphate (polyP) via transfer of phosphate from ATP to a growing polyP chain, releasing ADP. VTC exposes its catalytic domain vtc4 to the cytosol, where the growing polyP chain winds through a tunnel-shaped pocket, integrating cytoplasmic polymer synthesis with polyP membrane translocation. The VTC complex carries 9 vacuolar transmembrane domains, which are likely to constitute the translocation channel into the organelle lumen. PolyP synthesis is tightly coupled to its transport into the vacuole lumen, in order to avoid otherwise toxic intermediates in the cytosol, and it depends on the proton gradient across the membrane, formed by V-ATPase. The VTC complex also plays a role in vacuolar membrane fusion. The polypeptide is Vacuolar transporter chaperone complex subunit 4 (vtc4) (Schizosaccharomyces pombe (strain 972 / ATCC 24843) (Fission yeast)).